A 102-amino-acid polypeptide reads, in one-letter code: NADH-quinone oxidoreductase subunit K (102 aa).

The next 3 helical transmembrane spans lie at 6 to 26 (LEHG…GLMV), 30 to 50 (ILFV…AFVV), and 62 to 82 (VMFI…LAIL).

The protein belongs to the complex I subunit 4L family. NDH-1 is composed of 13 different subunits. Subunits NuoA, H, J, K, L, M, N constitute the membrane sector of the complex.

Its subcellular location is the cell inner membrane. It carries out the reaction a quinone + NADH + 5 H(+)(in) = a quinol + NAD(+) + 4 H(+)(out). Functionally, NDH-1 shuttles electrons from NADH, via FMN and iron-sulfur (Fe-S) centers, to quinones in the respiratory chain. The immediate electron acceptor for the enzyme in this species is believed to be ubiquinone. Couples the redox reaction to proton translocation (for every two electrons transferred, four hydrogen ions are translocated across the cytoplasmic membrane), and thus conserves the redox energy in a proton gradient. The chain is NADH-quinone oxidoreductase subunit K from Pseudomonas syringae pv. tomato (strain ATCC BAA-871 / DC3000).